A 138-amino-acid chain; its full sequence is Small ribosomal subunit protein uS11c (138 aa).

Residues 1–22 are disordered; sequence MAKAIPKISSRRNGRIGSRKGA. Basic residues predominate over residues 9-22; it reads SSRRNGRIGSRKGA.

It belongs to the universal ribosomal protein uS11 family. Part of the 30S ribosomal subunit.

The protein localises to the plastid. Its subcellular location is the chloroplast. This is Small ribosomal subunit protein uS11c from Nicotiana tabacum (Common tobacco).